The chain runs to 224 residues: Uracil-DNA glycosylase (224 aa).

Aspartate 62 serves as the catalytic Proton acceptor.

Belongs to the uracil-DNA glycosylase (UDG) superfamily. UNG family.

It is found in the cytoplasm. The catalysed reaction is Hydrolyzes single-stranded DNA or mismatched double-stranded DNA and polynucleotides, releasing free uracil.. Functionally, excises uracil residues from the DNA which can arise as a result of misincorporation of dUMP residues by DNA polymerase or due to deamination of cytosine. The sequence is that of Uracil-DNA glycosylase from Aliivibrio salmonicida (strain LFI1238) (Vibrio salmonicida (strain LFI1238)).